We begin with the raw amino-acid sequence, 1149 residues long: Guanine nucleotide exchange factor DBS (1149 aa).

Residues 52–224 form the CRAL-TRIO domain; sequence AATASDEIMH…DLGGTLDYCH (173 aa). A Spectrin repeat occupies 351–456; the sequence is LQLRHFEQGF…VTRRRGLLSK (106 aa). Residues Ser457, Ser462, Ser471, and Ser480 each carry the phosphoserine modification. A coiled-coil region spans residues 503–529; sequence LETGAENKIQELNEIYKEYECILNQDL. The interval 555–627 is disordered; that stretch reads KKLAAKQTRP…RTSSTGEEEE (73 aa). Positions 583-594 are enriched in low complexity; it reads PGSWRSSENSSS. Basic and acidic residues predominate over residues 607–616; it reads AKSEMSEPRQ. Residue Ser621 is modified to Phosphoserine. Thr622 carries the phosphothreonine modification. One can recognise a DH domain in the interval 632–812; the sequence is LRRHVMNELL…LGILKAVNDS (181 aa). Residues 841–950 enclose the PH domain; it reads TDHKKGHTKV…IRKVLTSQLQ (110 aa). Positions 956 to 1033 are disordered; sequence SQHRALEQSH…EAPEEDGGWS (78 aa). Over residues 966-978 the composition is skewed to low complexity; the sequence is SLPLPTPSSTSPT. 4 positions are modified to phosphoserine: Ser1033, Ser1034, Ser1041, and Ser1042. Positions 1055-1116 constitute an SH3 domain; that stretch reads LVPGKYTVVM…PASSLSTLLG (62 aa).

This sequence belongs to the MCF2 family. Interacts with GTP-bound RAC1. Interacts with CDC42. Interacts with RHOA. Interacts with CCPG1, which results in specific inhibition of its exchange activity toward RHOA, but does not affect its activity on CDC42. Expressed at low levels in several hemopoietic cell lines and in thymus and spleen, and at higher levels in other tissues, particularly in brain.

The protein localises to the cytoplasm. It is found in the cell membrane. In terms of biological role, guanine nucleotide exchange factor that catalyzes guanine nucleotide exchange on RHOA and CDC42, and thereby contributes to the regulation of RHOA and CDC42 signaling pathways. Seems to lack activity with RAC1. Becomes activated and highly tumorigenic by truncation of the N-terminus. In Mus musculus (Mouse), this protein is Guanine nucleotide exchange factor DBS (Mcf2l).